The following is a 1149-amino-acid chain: Translocase of chloroplast 126, chloroplastic (1149 aa).

Disordered stretches follow at residues 1 to 206, 219 to 292, and 315 to 431; these read MDAL…GKEL, NMPN…RELT, and LELK…VNPS. Residues 131–142 show a composition bias toward acidic residues; the sequence is LYYDDYGDDGEV. A compositionally biased stretch (low complexity) spans 152–168; the sequence is TSSSSSSSSSECSSSAS. Acidic residues-rich tracts occupy residues 271–280 and 335–357; these read YDQEGEDADS and GESDADADADADDEDVESGDEHE. Polar residues predominate over residues 406–429; sequence TAATDTQSSNAASSTQVAGTTDVN. Residues 514-743 enclose the AIG1-type G domain; that stretch reads DFACTILVLG…KLQDTAAPGR (230 aa). A G1 region spans residues 523–530; that stretch reads GKTGVGKS. 526–531 contacts GTP; it reads GVGKSA. S530 contributes to the Mg(2+) binding site. Residues 550–554 form a G2 region; that stretch reads STTNV. Residues 570–573 form a G3 region; sequence DTPG. The segment at 642 to 645 is G4; the sequence is THAS. Residues H643 and 691–692 each bind GTP; that span reads EN. A G5 region spans residues 691–693; it reads ENH. Disordered stretches follow at residues 769–800 and 833–869; these read KLPDEQLDESDESDDDEEDEEEGDEYDDLPPF and KQHREQLQRRKEMKKRATAMRKEGLSHPADEADDEAG. Residues 773 to 796 show a composition bias toward acidic residues; sequence EQLDESDESDDDEEDEEEGDEYDD. Composition is skewed to basic and acidic residues over residues 833 to 842 and 852 to 862; these read KQHREQLQRR and MRKEGLSHPAD. A helical transmembrane segment spans residues 1123 to 1144; sequence MVLIGIVPILRSLINCRFGFGG.

This sequence belongs to the TRAFAC class TrmE-Era-EngA-EngB-Septin-like GTPase superfamily. AIG1/Toc34/Toc159-like paraseptin GTPase family. TOC159 subfamily. In terms of assembly, part of the TOC core complex. Mg(2+) is required as a cofactor.

It localises to the plastid. Its subcellular location is the chloroplast outer membrane. GTPase involved in protein precursor import into chloroplasts. Seems to recognize chloroplast-destined precursor proteins and regulate their presentation to the translocation channel through GTP hydrolysis. Probably specialized in the import of nuclear encoded non-photosynthetic preproteins from the cytoplasm to the chloroplast. In Physcomitrium patens (Spreading-leaved earth moss), this protein is Translocase of chloroplast 126, chloroplastic.